Consider the following 961-residue polypeptide: Vinculin (961 aa).

2 tandem repeats follow at residues 258–362 (ELDN…MGEL) and 371–470 (LGVD…ELKA). A 2 X repeats region spans residues 258–470 (ELDNLTVLKK…LTQKLYELKA (213 aa)). Residues 720 to 778 (AIAPPQPPPLPTSLPPPIPELSALHLSNQNAERAPPRPPLPREGLAPVRPPPPETDDED) are disordered. The span at 723-738 (PPQPPPLPTSLPPPIP) shows a compositional bias: pro residues. Phosphothreonine is present on Thr774.

Belongs to the vinculin/alpha-catenin family. Exhibits self-association properties.

It localises to the cytoplasm. Its subcellular location is the cytoskeleton. The protein localises to the cell junction. It is found in the adherens junction. The protein resides in the cell membrane. In terms of biological role, involved in cell adhesion. May be involved in the attachment of the actin-based microfilaments to the plasma membrane. The chain is Vinculin (Vinc) from Drosophila melanogaster (Fruit fly).